Consider the following 137-residue polypeptide: Prefoldin subunit alpha (137 aa).

Belongs to the prefoldin subunit alpha family. In terms of assembly, heterohexamer of two alpha and four beta subunits.

The protein resides in the cytoplasm. Its function is as follows. Molecular chaperone capable of stabilizing a range of proteins. Seems to fulfill an ATP-independent, HSP70-like function in archaeal de novo protein folding. This chain is Prefoldin subunit alpha (pfdA), found in Archaeoglobus fulgidus (strain ATCC 49558 / DSM 4304 / JCM 9628 / NBRC 100126 / VC-16).